The following is a 312-amino-acid chain: tRNA dimethylallyltransferase (312 aa).

Residue G11–T18 coordinates ATP. A substrate-binding site is contributed by T13–T18. Positions D36–C39 are interaction with substrate tRNA.

The protein belongs to the IPP transferase family. In terms of assembly, monomer. Requires Mg(2+) as cofactor.

The enzyme catalyses adenosine(37) in tRNA + dimethylallyl diphosphate = N(6)-dimethylallyladenosine(37) in tRNA + diphosphate. Catalyzes the transfer of a dimethylallyl group onto the adenine at position 37 in tRNAs that read codons beginning with uridine, leading to the formation of N6-(dimethylallyl)adenosine (i(6)A). The chain is tRNA dimethylallyltransferase from Caldicellulosiruptor saccharolyticus (strain ATCC 43494 / DSM 8903 / Tp8T 6331).